An 82-amino-acid chain; its full sequence is Exodeoxyribonuclease 7 small subunit (82 aa).

Belongs to the XseB family. In terms of assembly, heterooligomer composed of large and small subunits.

It is found in the cytoplasm. It carries out the reaction Exonucleolytic cleavage in either 5'- to 3'- or 3'- to 5'-direction to yield nucleoside 5'-phosphates.. In terms of biological role, bidirectionally degrades single-stranded DNA into large acid-insoluble oligonucleotides, which are then degraded further into small acid-soluble oligonucleotides. The protein is Exodeoxyribonuclease 7 small subunit of Mannheimia succiniciproducens (strain KCTC 0769BP / MBEL55E).